A 112-amino-acid chain; its full sequence is MLLRTVILFALAAVAEIGGAWLIWQAVREGRPFWWAGLGVMALGAYGFIATLQADASFGRILAAYGGVFVAGSLLWGTVVDGYRPDRWDVIGAVVCLVGVAVIMAAPRGQGA.

The next 4 helical transmembrane spans lie at 6-26, 32-52, 61-81, and 87-107; these read VILFALAAVAEIGGAWLIWQA, PFWWAGLGVMALGAYGFIATL, ILAAYGGVFVAGSLLWGTVVD, and RWDVIGAVVCLVGVAVIMAAP.

The protein belongs to the UPF0060 family.

It localises to the cell membrane. The chain is UPF0060 membrane protein CMS0846 from Clavibacter sepedonicus (Clavibacter michiganensis subsp. sepedonicus).